The chain runs to 918 residues: Cell surface glycoprotein 1 (918 aa).

The signal sequence occupies residues 1–34 (MTDTNEKIRSLFLTALMVFSVFAGTIAFSGGAAA). N-linked (GlcNAc...) asparagine glycans are attached at residues N37, N56, N110, N219, N250, N261, and N291. A glycan (N-linked (GalNAc...) asparagine) is linked at N306. N-linked (GlcNAc...) asparagine glycosylation is found at N318, N343, N392, N434, N487, N541, N555, N572, N585, N614, N715, N776, N836, and N845. The segment at 815 to 894 (HQDTNGNEAY…DESETTAAEG (80 aa)) is disordered. The span at 833 to 846 (YTQNGSAVTDSANV) shows a compositional bias: polar residues. Residues 849–875 (VEEEQTEAPDTETETEAPDTETEEETD) show a composition bias toward acidic residues. A helical transmembrane segment spans residues 894-914 (GPGFTAAIALIALVAAALLAV). The PGF sorting signal motif lies at 895–897 (PGF).

This sequence belongs to the halobacterial S-layer protein family. N-glycosylated on Asn-306; this N-linked glycan is a branched trisaccharide containing 2-amino-6-sulfo-2,6-dideoxy-glucose (sulfoquinovosamine). Post-translationally, cleaved by the archaeosortase ArtA at the C-terminus, with removal of a short hydrophobic segment. In terms of processing, lipidation.

It localises to the secreted. Its subcellular location is the cell wall. It is found in the S-layer. The protein localises to the cell membrane. In terms of biological role, S-layer protein. The S-layer is a paracrystalline mono-layered assembly of proteins which coat the surface of the cell. In H.hispanica, the S-layer contains two different glycoproteins, Slg1 and Slg2, which share highly similar amino acid sequences. The polypeptide is Cell surface glycoprotein 1 (Haloarcula hispanica (strain ATCC 33960 / DSM 4426 / JCM 8911 / NBRC 102182 / NCIMB 2187 / VKM B-1755)).